The sequence spans 202 residues: Large ribosomal subunit protein bL9 (202 aa).

A disordered region spans residues 176–202; sequence AAGEFFDPDAQHDDEPAAEDDQNAEEK. Over residues 191-202 the composition is skewed to acidic residues; the sequence is PAAEDDQNAEEK.

Belongs to the bacterial ribosomal protein bL9 family.

Binds to the 23S rRNA. In Nitrobacter winogradskyi (strain ATCC 25391 / DSM 10237 / CIP 104748 / NCIMB 11846 / Nb-255), this protein is Large ribosomal subunit protein bL9.